Consider the following 365-residue polypeptide: Aminomethyltransferase (365 aa).

This sequence belongs to the GcvT family. The glycine cleavage system is composed of four proteins: P, T, L and H.

It catalyses the reaction N(6)-[(R)-S(8)-aminomethyldihydrolipoyl]-L-lysyl-[protein] + (6S)-5,6,7,8-tetrahydrofolate = N(6)-[(R)-dihydrolipoyl]-L-lysyl-[protein] + (6R)-5,10-methylene-5,6,7,8-tetrahydrofolate + NH4(+). Its function is as follows. The glycine cleavage system catalyzes the degradation of glycine. This chain is Aminomethyltransferase, found in Frankia alni (strain DSM 45986 / CECT 9034 / ACN14a).